A 213-amino-acid polypeptide reads, in one-letter code: Thiamine-phosphate synthase (213 aa).

4-amino-2-methyl-5-(diphosphooxymethyl)pyrimidine-binding positions include 38–42 (QLRIK) and Asn-70. The Mg(2+) site is built by Asp-71 and Asp-90. Ser-109 serves as a coordination point for 4-amino-2-methyl-5-(diphosphooxymethyl)pyrimidine. 135–137 (TQT) is a 2-[(2R,5Z)-2-carboxy-4-methylthiazol-5(2H)-ylidene]ethyl phosphate binding site. Lys-138 contributes to the 4-amino-2-methyl-5-(diphosphooxymethyl)pyrimidine binding site. 2-[(2R,5Z)-2-carboxy-4-methylthiazol-5(2H)-ylidene]ethyl phosphate is bound by residues Gly-168 and 188–189 (VS).

This sequence belongs to the thiamine-phosphate synthase family. It depends on Mg(2+) as a cofactor.

It carries out the reaction 2-[(2R,5Z)-2-carboxy-4-methylthiazol-5(2H)-ylidene]ethyl phosphate + 4-amino-2-methyl-5-(diphosphooxymethyl)pyrimidine + 2 H(+) = thiamine phosphate + CO2 + diphosphate. It catalyses the reaction 2-(2-carboxy-4-methylthiazol-5-yl)ethyl phosphate + 4-amino-2-methyl-5-(diphosphooxymethyl)pyrimidine + 2 H(+) = thiamine phosphate + CO2 + diphosphate. The catalysed reaction is 4-methyl-5-(2-phosphooxyethyl)-thiazole + 4-amino-2-methyl-5-(diphosphooxymethyl)pyrimidine + H(+) = thiamine phosphate + diphosphate. Its pathway is cofactor biosynthesis; thiamine diphosphate biosynthesis; thiamine phosphate from 4-amino-2-methyl-5-diphosphomethylpyrimidine and 4-methyl-5-(2-phosphoethyl)-thiazole: step 1/1. Functionally, condenses 4-methyl-5-(beta-hydroxyethyl)thiazole monophosphate (THZ-P) and 2-methyl-4-amino-5-hydroxymethyl pyrimidine pyrophosphate (HMP-PP) to form thiamine monophosphate (TMP). The sequence is that of Thiamine-phosphate synthase from Pectobacterium atrosepticum (strain SCRI 1043 / ATCC BAA-672) (Erwinia carotovora subsp. atroseptica).